Consider the following 317-residue polypeptide: Ribosomal protein L11 methyltransferase (317 aa).

Thr139, Gly162, Asp184, and Asn226 together coordinate S-adenosyl-L-methionine. Positions 274–297 (EHVATRPDPASPGGDRRAGRGDAG) are disordered.

This sequence belongs to the methyltransferase superfamily. PrmA family.

It is found in the cytoplasm. The catalysed reaction is L-lysyl-[protein] + 3 S-adenosyl-L-methionine = N(6),N(6),N(6)-trimethyl-L-lysyl-[protein] + 3 S-adenosyl-L-homocysteine + 3 H(+). In terms of biological role, methylates ribosomal protein L11. This is Ribosomal protein L11 methyltransferase from Sorangium cellulosum (strain So ce56) (Polyangium cellulosum (strain So ce56)).